Consider the following 177-residue polypeptide: ATP-dependent protease subunit HslV (177 aa).

Thr7 is an active-site residue. Na(+) is bound by residues Ala162, Cys165, and Thr168.

The protein belongs to the peptidase T1B family. HslV subfamily. A double ring-shaped homohexamer of HslV is capped on each side by a ring-shaped HslU homohexamer. The assembly of the HslU/HslV complex is dependent on binding of ATP.

It is found in the cytoplasm. The catalysed reaction is ATP-dependent cleavage of peptide bonds with broad specificity.. Its activity is regulated as follows. Allosterically activated by HslU binding. Its function is as follows. Protease subunit of a proteasome-like degradation complex believed to be a general protein degrading machinery. The polypeptide is ATP-dependent protease subunit HslV (Thioalkalivibrio sulfidiphilus (strain HL-EbGR7)).